Reading from the N-terminus, the 78-residue chain is Sec-independent protein translocase protein TatA (78 aa).

The chain crosses the membrane as a helical span at residues 1–21; sequence MGGISIWQLLIVALIVVLLFG. Positions 40 to 78 are disordered; that stretch reads KSAMSSEEEKKAIEDSASEKTAQTEEKKTESKDKDKEQV. A compositionally biased stretch (basic and acidic residues) spans 46-78; the sequence is EEEKKAIEDSASEKTAQTEEKKTESKDKDKEQV.

This sequence belongs to the TatA/E family. The Tat system comprises two distinct complexes: a TatABC complex, containing multiple copies of TatA, TatB and TatC subunits, and a separate TatA complex, containing only TatA subunits. Substrates initially bind to the TatABC complex, which probably triggers association of the separate TatA complex to form the active translocon.

It localises to the cell inner membrane. Part of the twin-arginine translocation (Tat) system that transports large folded proteins containing a characteristic twin-arginine motif in their signal peptide across membranes. TatA could form the protein-conducting channel of the Tat system. The chain is Sec-independent protein translocase protein TatA from Shewanella sediminis (strain HAW-EB3).